Consider the following 219-residue polypeptide: Ribose-5-phosphate isomerase A (219 aa).

Substrate-binding positions include 28 to 31, 81 to 84, and 94 to 97; these read TGST, DGAD, and KGGG. E103 serves as the catalytic Proton acceptor. Substrate is bound at residue K121.

The protein belongs to the ribose 5-phosphate isomerase family. Homodimer.

The enzyme catalyses aldehydo-D-ribose 5-phosphate = D-ribulose 5-phosphate. The protein operates within carbohydrate degradation; pentose phosphate pathway; D-ribose 5-phosphate from D-ribulose 5-phosphate (non-oxidative stage): step 1/1. Functionally, catalyzes the reversible conversion of ribose-5-phosphate to ribulose 5-phosphate. This Methylibium petroleiphilum (strain ATCC BAA-1232 / LMG 22953 / PM1) protein is Ribose-5-phosphate isomerase A.